The following is a 381-amino-acid chain: tRNA pseudouridine synthase D (381 aa).

Catalysis depends on Asp81, which acts as the Nucleophile. One can recognise a TRUD domain in the interval 160–335 (GMPNYFGSQR…TLGSRRFFWV (176 aa)).

The protein belongs to the pseudouridine synthase TruD family.

The catalysed reaction is uridine(13) in tRNA = pseudouridine(13) in tRNA. Responsible for synthesis of pseudouridine from uracil-13 in transfer RNAs. The chain is tRNA pseudouridine synthase D from Helicobacter pylori (strain J99 / ATCC 700824) (Campylobacter pylori J99).